A 122-amino-acid polypeptide reads, in one-letter code: Small ribosomal subunit protein uS13 (122 aa).

Positions 94–122 (RGLPVRGQKTKTNARTRKGPRKTVAGKRK) are disordered.

Belongs to the universal ribosomal protein uS13 family. As to quaternary structure, part of the 30S ribosomal subunit. Forms a loose heterodimer with protein S19. Forms two bridges to the 50S subunit in the 70S ribosome.

Its function is as follows. Located at the top of the head of the 30S subunit, it contacts several helices of the 16S rRNA. In the 70S ribosome it contacts the 23S rRNA (bridge B1a) and protein L5 of the 50S subunit (bridge B1b), connecting the 2 subunits; these bridges are implicated in subunit movement. Contacts the tRNAs in the A and P-sites. The polypeptide is Small ribosomal subunit protein uS13 (Syntrophotalea carbinolica (strain DSM 2380 / NBRC 103641 / GraBd1) (Pelobacter carbinolicus)).